We begin with the raw amino-acid sequence, 851 residues long: Pentatricopeptide repeat-containing protein At3g54980, mitochondrial (851 aa).

Residues 1–26 (MRSLLVFRKIPSRIRLRNLRNNKPFC) constitute a mitochondrion transit peptide. PPR repeat units lie at residues 162-196 (NSRAFNYLLNAYSKDRQTDHAVDIVNQMLELDVIP), 197-231 (FFPYVNRTLSALVQRNSLTEAKELYSRMVAIGVDG), 232-266 (DNVTTQLLMRASLREEKPAEALEVLSRAIERGAEP), 267-301 (DSLLYSLAVQACCKTLDLAMANSLLREMKEKKLCV), 303-337 (SQETYTSVILASVKQGNMDDAIRLKDEMLSDGISM), 338-372 (NVVAATSLITGHCKNNDLVSALVLFDKMEKEGPSP), 373-407 (NSVTFSVLIEWFRKNGEMEKALEFYKKMEVLGLTP), 408-438 (SVFHVHTIIQGWLKGQKHEEALKLFDESFET), 442-476 (NVFVCNTILSWLCKQGKTDEATELLSKMESRGIGP), 477-511 (NVVSYNNVMLGHCRQKNMDLARIVFSNILEKGLKP), 512-546 (NNYTYSILIDGCFRNHDEQNALEVVNHMTSSNIEV), 547-577 (NGVVYQTIINGLCKVGQTSKARELLANMIEE), 583-617 (SCMSYNSIIDGFFKEGEMDSAVAAYEEMCGNGISP), 618-652 (NVITYTSLMNGLCKNNRMDQALEMRDEMKNKGVKL), 653-687 (DIPAYGALIDGFCKRSNMESASALFSELLEEGLNP), 688-722 (SQPIYNSLISGFRNLGNMVAALDLYKKMLKDGLRC), 723-757 (DLGTYTTLIDGLLKDGNLILASELYTEMQAVGLVP), 758-792 (DEIIYTVIVNGLSKKGQFVKVVKMFEEMKKNNVTP), and 793-827 (NVLIYNAVIAGHYREGNLDEAFRLHDEMLDKGILP).

The protein belongs to the PPR family. P subfamily.

Its subcellular location is the mitochondrion. The chain is Pentatricopeptide repeat-containing protein At3g54980, mitochondrial from Arabidopsis thaliana (Mouse-ear cress).